We begin with the raw amino-acid sequence, 309 residues long: Zinc finger protein-like 1 homolog (309 aa).

A B box-type; degenerate zinc finger spans residues 1–43; that stretch reads MGLCKCPKRKVTNLFCYEHRVNVCEFCLVDNHPNCVVQSYLTW. The RING-type; atypical zinc finger occupies 53 to 101; that stretch reads CSLCKTTLAEGDTIRLNCLHLLHWKCFDEWAANFPATTAPAGYRCPCCS. The interval 200–221 is disordered; the sequence is GAESSSDTRPLLQLRDADNEEN. A helical transmembrane segment spans residues 254-274; sequence KIALFVIFLAVLALITIIMVM.

Belongs to the ZFPL1 family.

It is found in the membrane. The protein is Zinc finger protein-like 1 homolog of Caenorhabditis elegans.